The chain runs to 308 residues: Pantothenate kinase (308 aa).

93–100 (GSVAVGKS) contacts ATP.

This sequence belongs to the prokaryotic pantothenate kinase family.

The protein resides in the cytoplasm. The catalysed reaction is (R)-pantothenate + ATP = (R)-4'-phosphopantothenate + ADP + H(+). Its pathway is cofactor biosynthesis; coenzyme A biosynthesis; CoA from (R)-pantothenate: step 1/5. The polypeptide is Pantothenate kinase (Corynebacterium diphtheriae (strain ATCC 700971 / NCTC 13129 / Biotype gravis)).